Here is a 485-residue protein sequence, read N- to C-terminus: MTITPQHLIALLPLLIVGLTVVVVMLSIAWRRNHFLNATLSVIGLNAALVSLWFVGQAGAMDVTPLMRVDGFAMLYTGLVLLASLATCTFAYPWLEGYNDNQEEFYLLVLIASLGGILLTNANHLAALFLGIELISLPLFGLIGYAFRQKRSLEASIKYTILSAAASSFLLFGMALVYAQSGNLSFEALGKSLGDGMLHEPLLLAGFGLMIVGLGFKLSLVPFHLWTPDVYQGAPAPVSTFLATASKIAIFGVVMRLFLYAPVGDSEAVRVVLGIIAFASIIFGNLMALSQTNIKRLLGYSSISHLGYLLVALIALQSGEMSMEAVGVYLAGYLFSSLGAFGVVSLMSSPFRGPDADSLYSYRGLFWHRPVLAAVMTVMMLSLAGIPMTLGFIGKFYVLAVGVQASLWWLVAAVVVGSAIGLYYYLRVAVSLYLHAPQQPGRDAPTNWQYSAGGIVVLISALLVLVLGVWPQPLISLVQLAMPLM.

The next 14 helical transmembrane spans lie at Leu8–Ile28, Phe35–Val55, Gly71–Ala91, Phe105–Leu125, Ala127–Phe147, Tyr159–Ala179, Leu203–Phe223, Pro235–Met255, Val271–Gln291, Leu297–Gln317, Val326–Leu346, Ala373–Ile393, Trp408–Val430, and Ile455–Ile475.

The protein belongs to the complex I subunit 2 family. NDH-1 is composed of 13 different subunits. Subunits NuoA, H, J, K, L, M, N constitute the membrane sector of the complex.

The protein localises to the cell inner membrane. It carries out the reaction a quinone + NADH + 5 H(+)(in) = a quinol + NAD(+) + 4 H(+)(out). Functionally, NDH-1 shuttles electrons from NADH, via FMN and iron-sulfur (Fe-S) centers, to quinones in the respiratory chain. The immediate electron acceptor for the enzyme in this species is believed to be ubiquinone. Couples the redox reaction to proton translocation (for every two electrons transferred, four hydrogen ions are translocated across the cytoplasmic membrane), and thus conserves the redox energy in a proton gradient. The protein is NADH-quinone oxidoreductase subunit N of Salmonella dublin (strain CT_02021853).